The chain runs to 563 residues: Phosphomethylpyrimidine synthase (563 aa).

Residues 95-115 are disordered; sequence PGKNPSPMNNRTPVRAKQGKS. Substrate-binding positions include N200, M229, Y258, H294, 314–316, 355–358, and E394; these read SRG and DALR. Zn(2+) is bound at residue H398. Y421 contacts substrate. Residue H462 coordinates Zn(2+). Residues C544, C547, and C552 each coordinate [4Fe-4S] cluster.

It belongs to the ThiC family. Requires [4Fe-4S] cluster as cofactor.

The catalysed reaction is 5-amino-1-(5-phospho-beta-D-ribosyl)imidazole + S-adenosyl-L-methionine = 4-amino-2-methyl-5-(phosphooxymethyl)pyrimidine + CO + 5'-deoxyadenosine + formate + L-methionine + 3 H(+). It participates in cofactor biosynthesis; thiamine diphosphate biosynthesis. In terms of biological role, catalyzes the synthesis of the hydroxymethylpyrimidine phosphate (HMP-P) moiety of thiamine from aminoimidazole ribotide (AIR) in a radical S-adenosyl-L-methionine (SAM)-dependent reaction. The polypeptide is Phosphomethylpyrimidine synthase (Chlorobium phaeobacteroides (strain BS1)).